A 156-amino-acid chain; its full sequence is CRIB domain-containing protein RIC10 (156 aa).

Residues 30 to 43 (IGFPTDVKHVAHIG) enclose the CRIB domain. Residues 68–77 (RPSSFSNARP) show a composition bias toward polar residues. Residues 68–156 (RPSSFSNARP…SYKSTVSRLI (89 aa)) are disordered. Low complexity predominate over residues 78 to 96 (STSFFTSSSSTDFDQGSSQ). The span at 117–128 (NNKKKSSRRKKS) shows a compositional bias: basic residues. Over residues 129–156 (SSSSSSPKSSRSSVLSKSSYKSTVSRLI) the composition is skewed to low complexity.

In terms of tissue distribution, expressed in roots, leaves, flowers and pollen.

It localises to the cytoplasm. In terms of biological role, functions as a downstream effector of Rho-related GTP binding proteins of the 'Rho of Plants' (ROPs) family. Participates in the propagation of ROP GTPase signals in specific cellular responses. Is involved in pollen tube growth regulation. The chain is CRIB domain-containing protein RIC10 (RIC10) from Arabidopsis thaliana (Mouse-ear cress).